A 328-amino-acid polypeptide reads, in one-letter code: Eukaryotic translation initiation factor 3 subunit I (328 aa).

WD repeat units follow at residues 8–47 (GHER…RLGT), 50–91 (GHQG…GTIP), 148–187 (SIQT…ELNS), 190–229 (DHTG…CLKT), and 287–328 (GHFG…FVFE).

The protein belongs to the eIF-3 subunit I family. Component of the eukaryotic translation initiation factor 3 (eIF-3) complex.

It localises to the cytoplasm. In terms of biological role, component of the eukaryotic translation initiation factor 3 (eIF-3) complex, which is involved in protein synthesis of a specialized repertoire of mRNAs and, together with other initiation factors, stimulates binding of mRNA and methionyl-tRNAi to the 40S ribosome. The eIF-3 complex specifically targets and initiates translation of a subset of mRNAs involved in cell proliferation. The sequence is that of Eukaryotic translation initiation factor 3 subunit I from Culex quinquefasciatus (Southern house mosquito).